The chain runs to 75 residues: MKLTCVVIVAVLFLTANTFATADDPRNGLENLFLKAHHEMNPEASKLNERCLSGGEVCDFLFPKCCNYCILLFCS.

Residues Met1–Ala22 form the signal peptide. Positions Asp23 to Glu49 are excised as a propeptide. 3 disulfides stabilise this stretch: Cys51–Cys66, Cys58–Cys69, and Cys65–Cys74.

In terms of tissue distribution, expressed by the venom duct.

It is found in the secreted. This Conus victoriae (Queen Victoria cone) protein is Conotoxin Vc6a.